We begin with the raw amino-acid sequence, 186 residues long: UPF0301 protein CGSHiEE_01530 (186 aa).

This sequence belongs to the UPF0301 (AlgH) family.

The protein is UPF0301 protein CGSHiEE_01530 of Haemophilus influenzae (strain PittEE).